The chain runs to 388 residues: bZIP transcription factor ABI5 homolog (388 aa).

Positions 1 to 36 (MASEMSKNVKVTDDQEVTSQERDQSGGTKVGGEEEI) are disordered. Phosphoserine is present on Ser-44. Positions 302–365 (VERRQRRMIK…KQMLVEKMME (64 aa)) constitute a bZIP domain. The interval 304–323 (RRQRRMIKNRESAARSRARK) is basic motif. Positions 330–344 (LEAELNYLKQENARL) are leucine-zipper. Residues 368–388 (KEKMNANRGGSQLRRSGSCMW) are disordered.

This sequence belongs to the bZIP family. ABI5 subfamily. In terms of assembly, forms homodimers. Interacts with VP1. Interacts with GF14D. Interacts with PP2C51. Interacts with SAPK2. Phosphorylated at Ser-44 by SAPK6. As to expression, expressed in roots, leaves and panicles. Expressed in seeds.

The protein localises to the nucleus. Functionally, transcription factor that possesses transactivation activity in yeast. Involved in abscisic acid (ABA) signaling pathway. Binds to the G-box motif 5'-CACGTG-3' of TRAB1 gene promoter. Involved in the regulation of pollen maturation. May act as negative regulator of salt stress response. Together with PYL5, PP2C30 and SAPK2, is part of an ABA signaling unit that modulates seed germination and early seedling growth. The polypeptide is bZIP transcription factor ABI5 homolog (Oryza sativa subsp. japonica (Rice)).